We begin with the raw amino-acid sequence, 647 residues long: Threonine--tRNA ligase (647 aa).

Residues 1-61 (MINITFPDGA…TEDGSIEIVT (61 aa)) form the TGS domain. A catalytic region spans residues 242-540 (DHRKLGKELD…LIENYKGAFP (299 aa)). Residues C336, H387, and H517 each coordinate Zn(2+).

Belongs to the class-II aminoacyl-tRNA synthetase family. Homodimer. Requires Zn(2+) as cofactor.

It is found in the cytoplasm. It catalyses the reaction tRNA(Thr) + L-threonine + ATP = L-threonyl-tRNA(Thr) + AMP + diphosphate + H(+). Functionally, catalyzes the attachment of threonine to tRNA(Thr) in a two-step reaction: L-threonine is first activated by ATP to form Thr-AMP and then transferred to the acceptor end of tRNA(Thr). Also edits incorrectly charged L-seryl-tRNA(Thr). The polypeptide is Threonine--tRNA ligase (Streptococcus pneumoniae serotype 19F (strain G54)).